The primary structure comprises 219 residues: Thiopurine S-methyltransferase (219 aa).

Trp10, Leu45, Glu66, and Arg123 together coordinate S-adenosyl-L-methionine.

This sequence belongs to the class I-like SAM-binding methyltransferase superfamily. TPMT family.

The protein localises to the cytoplasm. It carries out the reaction S-adenosyl-L-methionine + a thiopurine = S-adenosyl-L-homocysteine + a thiopurine S-methylether.. The chain is Thiopurine S-methyltransferase from Marinobacter nauticus (strain ATCC 700491 / DSM 11845 / VT8) (Marinobacter aquaeolei).